Consider the following 413-residue polypeptide: Serine hydroxymethyltransferase (413 aa).

Residues Leu119 and Gly123–Leu125 contribute to the (6S)-5,6,7,8-tetrahydrofolate site. Lys228 bears the N6-(pyridoxal phosphate)lysine mark. Ser351–Phe353 contributes to the (6S)-5,6,7,8-tetrahydrofolate binding site.

This sequence belongs to the SHMT family. Homodimer. Pyridoxal 5'-phosphate serves as cofactor.

The protein resides in the cytoplasm. It catalyses the reaction (6R)-5,10-methylene-5,6,7,8-tetrahydrofolate + glycine + H2O = (6S)-5,6,7,8-tetrahydrofolate + L-serine. It functions in the pathway one-carbon metabolism; tetrahydrofolate interconversion. Its pathway is amino-acid biosynthesis; glycine biosynthesis; glycine from L-serine: step 1/1. Functionally, catalyzes the reversible interconversion of serine and glycine with tetrahydrofolate (THF) serving as the one-carbon carrier. This reaction serves as the major source of one-carbon groups required for the biosynthesis of purines, thymidylate, methionine, and other important biomolecules. Also exhibits THF-independent aldolase activity toward beta-hydroxyamino acids, producing glycine and aldehydes, via a retro-aldol mechanism. The sequence is that of Serine hydroxymethyltransferase from Clostridium botulinum (strain Langeland / NCTC 10281 / Type F).